Consider the following 178-residue polypeptide: Adenine phosphoribosyltransferase (178 aa).

It belongs to the purine/pyrimidine phosphoribosyltransferase family. As to quaternary structure, homodimer.

The protein resides in the cytoplasm. It carries out the reaction AMP + diphosphate = 5-phospho-alpha-D-ribose 1-diphosphate + adenine. Its pathway is purine metabolism; AMP biosynthesis via salvage pathway; AMP from adenine: step 1/1. In terms of biological role, catalyzes a salvage reaction resulting in the formation of AMP, that is energically less costly than de novo synthesis. The protein is Adenine phosphoribosyltransferase of Cereibacter sphaeroides (strain KD131 / KCTC 12085) (Rhodobacter sphaeroides).